We begin with the raw amino-acid sequence, 556 residues long: U3 small nucleolar RNA-associated protein 18 homolog (556 aa).

Residues Met1 to Gly24 are compositionally biased toward basic residues. Residues Met1 to Arg70 are disordered. The span at Ala43–Ala65 shows a compositional bias: low complexity. Residue Lys84 forms a Glycyl lysine isopeptide (Lys-Gly) (interchain with G-Cter in SUMO2) linkage. Residues Arg111–Val143 form a disordered region. A phosphoserine mark is found at Ser121 and Ser124. Glycyl lysine isopeptide (Lys-Gly) (interchain with G-Cter in SUMO2) cross-links involve residues Lys183 and Lys201. The tract at residues Val193–Gln219 is disordered. Thr204 bears the Phosphothreonine mark. A phosphoserine mark is found at Ser205, Ser206, and Ser210. The segment covering Asp207 to Asp216 has biased composition (acidic residues). A Phosphothreonine modification is found at Thr221. WD repeat units follow at residues Pro249–Ile288, Leu293–Val333, Leu339–Lys380, Ile381–Arg419, Val421–Asn462, and Asn471–Asn512. Residue Lys517 forms a Glycyl lysine isopeptide (Lys-Gly) (interchain with G-Cter in SUMO2) linkage.

This sequence belongs to the WD repeat UTP18 family. As to quaternary structure, part of the small subunit (SSU) processome, composed of more than 70 proteins and the RNA chaperone small nucleolar RNA (snoRNA) U3.

The protein resides in the nucleus. It localises to the nucleolus. In terms of biological role, part of the small subunit (SSU) processome, first precursor of the small eukaryotic ribosomal subunit. During the assembly of the SSU processome in the nucleolus, many ribosome biogenesis factors, an RNA chaperone and ribosomal proteins associate with the nascent pre-rRNA and work in concert to generate RNA folding, modifications, rearrangements and cleavage as well as targeted degradation of pre-ribosomal RNA by the RNA exosome. Involved in nucleolar processing of pre-18S ribosomal RNA. The protein is U3 small nucleolar RNA-associated protein 18 homolog of Homo sapiens (Human).